The following is an 82-amino-acid chain: Myosin light chain alkali (82 aa).

The region spanning 7–42 (GCYEDFIECLKLYDKEENGTMMLAELQHALLALGES) is the EF-hand domain.

Myosin is a hexamer of 2 heavy chains and 4 light chains.

This is Myosin light chain alkali (Mlc1) from Drosophila mauritiana (Fruit fly).